The following is a 142-amino-acid chain: Large ribosomal subunit protein uL11 (142 aa).

The protein belongs to the universal ribosomal protein uL11 family. Part of the ribosomal stalk of the 50S ribosomal subunit. Interacts with L10 and the large rRNA to form the base of the stalk. L10 forms an elongated spine to which L12 dimers bind in a sequential fashion forming a multimeric L10(L12)X complex. Post-translationally, one or more lysine residues are methylated.

Functionally, forms part of the ribosomal stalk which helps the ribosome interact with GTP-bound translation factors. This chain is Large ribosomal subunit protein uL11, found in Colwellia psychrerythraea (strain 34H / ATCC BAA-681) (Vibrio psychroerythus).